The primary structure comprises 348 residues: Putative olfactory receptor 3A4 (348 aa).

Residues 1–28 are Extracellular-facing; it reads MDLGNSGNDSVVTKFVLLGLTETAALQP. N8 carries an N-linked (GlcNAc...) asparagine glycan. The helical transmembrane segment at 29–52 threads the bilayer; it reads ILFVIFLLAYVTTIGGTLSILAAI. At 53–60 the chain is on the cytoplasmic side; sequence LMETKLHS. The chain crosses the membrane as a helical span at residues 61–82; it reads PMYFFLGNLSLPDVGCVSVTVP. Residues 83-103 are Extracellular-facing; it reads AMLSHFISNDRSIPYKACLSE. C100 and C192 are joined by a disulfide. A helical membrane pass occupies residues 104–123; that stretch reads LFFFHLLAGADCFLLTIMAY. The Cytoplasmic portion of the chain corresponds to 124-143; that stretch reads DRYLAICQSLTYSSRMSWGI. A helical membrane pass occupies residues 144–161; that stretch reads QQALVGMSCVFSFTNALT. Topologically, residues 162-199 are extracellular; that stretch reads QTVALSPLNFCGPNVINHFYCDLPQPFQLSCSSVHLNG. Residues 200-222 form a helical membrane-spanning segment; the sequence is QLLFVAAAFMGVAPLVLITVSYA. At 223–239 the chain is on the cytoplasmic side; the sequence is HVAAAVLRIRSAEGRKK. Residues 240-262 form a helical membrane-spanning segment; the sequence is AFSTCSSHLTVVGIFYGTGVFSY. Residues 263–275 lie on the Extracellular side of the membrane; it reads TRLGSVESSDKDK. Residues 276 to 295 form a helical membrane-spanning segment; the sequence is GIGILNTVISPMLNPLIYWT. Residues 296-348 lie on the Cytoplasmic side of the membrane; sequence SLLDVGCISHCSSDAGVSPGPPVQSSLCCLQFTALLSPPPGWGGLSPLNSHGL.

Belongs to the G-protein coupled receptor 1 family.

It localises to the cell membrane. Functionally, odorant receptor. This is Putative olfactory receptor 3A4 (OR3A4P) from Homo sapiens (Human).